Reading from the N-terminus, the 84-residue chain is Putative defensin-like protein 114 (84 aa).

The first 24 residues, 1-24, serve as a signal peptide directing secretion; the sequence is MAITKKCFAAFVLILLFVMPFVYC. 4 cysteine pairs are disulfide-bonded: cysteine 41–cysteine 81, cysteine 47–cysteine 69, cysteine 54–cysteine 79, and cysteine 58–cysteine 80.

This sequence belongs to the DEFL family.

The protein resides in the secreted. The polypeptide is Putative defensin-like protein 114 (Arabidopsis thaliana (Mouse-ear cress)).